The sequence spans 446 residues: Chromosomal replication initiator protein DnaA (446 aa).

A domain I, interacts with DnaA modulators region spans residues 1-92; the sequence is MENISDLWNS…SQAEEEIDLP (92 aa). The segment at 93-109 is domain II; sequence PAKPNAAQDDSNHLPQS. Residues 110 to 326 form a domain III, AAA+ region region; that stretch reads MLNPKYTFDT…GALIRVVAYS (217 aa). Positions 154, 156, 157, and 158 each coordinate ATP. The segment at 327–446 is domain IV, binds dsDNA; it reads SLINKDINAD…QVEEINDILK (120 aa).

Belongs to the DnaA family. Oligomerizes as a right-handed, spiral filament on DNA at oriC.

It localises to the cytoplasm. In terms of biological role, plays an essential role in the initiation and regulation of chromosomal replication. ATP-DnaA binds to the origin of replication (oriC) to initiate formation of the DNA replication initiation complex once per cell cycle. Binds the DnaA box (a 9 base pair repeat at the origin) and separates the double-stranded (ds)DNA. Forms a right-handed helical filament on oriC DNA; dsDNA binds to the exterior of the filament while single-stranded (ss)DNA is stabiized in the filament's interior. The ATP-DnaA-oriC complex binds and stabilizes one strand of the AT-rich DNA unwinding element (DUE), permitting loading of DNA polymerase. After initiation quickly degrades to an ADP-DnaA complex that is not apt for DNA replication. Binds acidic phospholipids. The sequence is that of Chromosomal replication initiator protein DnaA from Bacillus anthracis (strain A0248).